A 76-amino-acid chain; its full sequence is Nemertide alpha-1 (76 aa).

Residues 1-28 form the signal peptide; sequence YRIASSSIAKMKTAVFLVGLLFLGLVFA. Positions 29-44 are excised as a propeptide; sequence DEAAIDSEFDQSIDKR. Cystine bridges form between Cys-46–Cys-60, Cys-53–Cys-64, and Cys-59–Cys-70. 2 positions are modified to 4-hydroxyproline: Pro-72 and Pro-73.

This sequence belongs to the nemertide family. As to expression, confined to the epidermis and to the mucus layer.

The protein resides in the secreted. Functionally, highly potent toxin against insect sodium channel (Nav) and with less potent activity against mammalian sodium channels. Potently inhibits inactivation of insect sodium channels of B.germanica (BgNav1) (EC(50)=8.6 nM), D.melanogaster (Dm Nav1), and arachnid sodium channel V.destructor (VdNav1). Also delays the inactivation of most mammalian Nav channels tested (human Nav1.1/SCN1A; EC(50)=124.1 nM, rat Nav1.2/SCN2A; EC(50)=359.6 nM, rat Nav1.3/SCN3A; EC(50)=135.4 nM, rat Nav1.4/SCN4A; EC(50)=145.5 nM, human Nav1.5/SCN5A; EC(50)=138.3 nM, mouse Nav1.6/SCN8A; EC(50)=240.4 nM, human Nav1.9/SCN9A; EC(50)=76.5 nM). 1 uM is enough to completely inhibits the inactivation, resulting in sustained non-inactivating currents. In addition, the toxin significantly enhances the recovery from inactivation, and the open state is not required for the toxin to interact with the channel. In vivo, injection into green crabs (Carcinus maenas at 1 mug/kg) of small doses (1-5 ug/kg) results in slow and fast permanent paralysis, whereas injection of high doses (more than 10 ug/kg) causes death. Injection into juvenile Blaptica dubia cockroaches results in death or permanent paralysis at doses higher than 7.1 ug/kg. Injection into brine shrimp (Artemia salina) stops movement or causes death after 24 hours (EC(50)=0.3 uM). In the rare inherited cardiac arrhythmia Brugada syndrome 1 (BRGDA1), this toxin is able to restore the loss of function by reducing channel inactivation, without affecting activation, by binding to Nav1.5/SCN5A. This is Nemertide alpha-1 from Lineus lacteus (Ribbon worm).